Consider the following 169-residue polypeptide: Ion-translocating oxidoreductase complex subunit B (169 aa).

The segment at 1-23 is hydrophobic; that stretch reads MIISIIIFSILSFILGVIVSLVS. The 4Fe-4S domain occupies 30–89; that stretch reads SNLSLINDIDELLPQMQCAQCGYPGCYAYSQAIVDGNENIYKCIPGGKEVVLKLENLLNK. Residues Cys-47, Cys-50, Cys-55, Cys-72, Cys-116, Cys-119, Cys-122, Cys-126, Cys-146, Cys-149, Cys-152, and Cys-156 each coordinate [4Fe-4S] cluster. 2 consecutive 4Fe-4S ferredoxin-type domains span residues 107 to 136 and 137 to 166; these read SIVEIDENNCVGCSKCRLVCPVDAVVGTYN and FRHTVLIDSCTGCNLCIPLCPTNCIKKKIM.

It belongs to the 4Fe4S bacterial-type ferredoxin family. RnfB subfamily. The complex is composed of six subunits: RnfA, RnfB, RnfC, RnfD, RnfE and RnfG. [4Fe-4S] cluster is required as a cofactor.

It is found in the cell inner membrane. Its function is as follows. Part of a membrane-bound complex that couples electron transfer with translocation of ions across the membrane. This is Ion-translocating oxidoreductase complex subunit B from Buchnera aphidicola subsp. Baizongia pistaciae (strain Bp).